The primary structure comprises 399 residues: MEANAGSTLAPVNYSDDNVAKPLENQPVNFYSLTLEDLKAYIKSKGKEQFRAQQIFKWVYEQRVTDPEQMTNLSKEFRQDLPSMLSFDLPPVLQHLKSVDGTQKFLFDMKDGMSVEAVVIPSEDRLTLCISSEVGCNMACKFCFTGKQKLKRRLRTEDIVGQFMQVHDRLAEGQRITNIVFMGMGEPLDNPEAVFKTIDVIHSPWGINLSRKKITVSTSGIVPEMWRVADAKVRLAVSLNGPNDEIRSQVMPINKRWDTKALLEACKEHYRVSKDKITFEYVLLKGITDQLEHARQLVKLVKDVPCKINIIPFNEHPGSGYERPDDDTIQAFHTELMNLGAHVLLRRSMGRDIFAACGQLTTVKERPQTMDISNSRLAGLPKYKRELLAAQEAEQNNQH.

Catalysis depends on Glu-116, which acts as the Proton acceptor. The Radical SAM core domain maps to 122-352 (SEDRLTLCIS…VLLRRSMGRD (231 aa)). Cys-129 and Cys-357 are joined by a disulfide. The [4Fe-4S] cluster site is built by Cys-136, Cys-140, and Cys-143. Residues 185–186 (GE), Ser-217, 238–240 (SLN), and Asn-314 each bind S-adenosyl-L-methionine. The S-methylcysteine intermediate role is filled by Cys-357.

It belongs to the radical SAM superfamily. RlmN family. Requires [4Fe-4S] cluster as cofactor.

It localises to the cytoplasm. It carries out the reaction adenosine(2503) in 23S rRNA + 2 reduced [2Fe-2S]-[ferredoxin] + 2 S-adenosyl-L-methionine = 2-methyladenosine(2503) in 23S rRNA + 5'-deoxyadenosine + L-methionine + 2 oxidized [2Fe-2S]-[ferredoxin] + S-adenosyl-L-homocysteine. It catalyses the reaction adenosine(37) in tRNA + 2 reduced [2Fe-2S]-[ferredoxin] + 2 S-adenosyl-L-methionine = 2-methyladenosine(37) in tRNA + 5'-deoxyadenosine + L-methionine + 2 oxidized [2Fe-2S]-[ferredoxin] + S-adenosyl-L-homocysteine. Its function is as follows. Specifically methylates position 2 of adenine 2503 in 23S rRNA and position 2 of adenine 37 in tRNAs. m2A2503 modification seems to play a crucial role in the proofreading step occurring at the peptidyl transferase center and thus would serve to optimize ribosomal fidelity. The polypeptide is Dual-specificity RNA methyltransferase RlmN (Bdellovibrio bacteriovorus (strain ATCC 15356 / DSM 50701 / NCIMB 9529 / HD100)).